A 46-amino-acid polypeptide reads, in one-letter code: Large ribosomal subunit protein bL33A (46 aa).

This sequence belongs to the bacterial ribosomal protein bL33 family.

The sequence is that of Large ribosomal subunit protein bL33A from Mesomycoplasma hyopneumoniae (strain 7448) (Mycoplasma hyopneumoniae).